A 610-amino-acid polypeptide reads, in one-letter code: Serine/threonine-protein kinase VRK1 (610 aa).

Positions 32 to 384 (FIVGKQFATG…PRKRTTRKAV (353 aa)) constitute a Protein kinase domain. ATP contacts are provided by residues 38–46 (FATGGFGRI) and K61. D167 acts as the Proton acceptor in catalysis. Disordered regions lie at residues 317–476 (IQKT…NKVA), 498–530 (ISVASDKSPTTSTPSSSSGLRSKRKSSEDVGEG), 544–577 (KKAKTKSGISSATKASPTELRRVPGVRNFPKGRR), and 590–610 (ERLASRQTKPTFDDSSCSSEV). Positions 352–373 (AVKEESDNKDNDEVEVKPEKKA) are enriched in basic and acidic residues. Positions 388 to 397 (NDSDDNEEQY) are enriched in acidic residues. Low complexity predominate over residues 447–458 (TTPSSAASTSRS). Residues 465 to 474 (LTSSTASSNK) are compositionally biased toward polar residues. Residues 502–517 (SDKSPTTSTPSSSSGL) are compositionally biased toward low complexity. Composition is skewed to polar residues over residues 550-559 (SGISSATKAS) and 594-610 (SRQTKPTFDDSSCSSEV).

This sequence belongs to the protein kinase superfamily. CK1 Ser/Thr protein kinase family. VRK subfamily. Autophosphorylates in vitro. Present in germ cells at all stages of progression from the mitotic zone to mature oocytes, but not in maturing spermatids (at the protein level). Expressed in the ventral nerve cord and vulva cells.

Its subcellular location is the nucleus. The protein resides in the cytoplasm. The protein localises to the cajal body. The catalysed reaction is L-seryl-[protein] + ATP = O-phospho-L-seryl-[protein] + ADP + H(+). The enzyme catalyses L-threonyl-[protein] + ATP = O-phospho-L-threonyl-[protein] + ADP + H(+). Its function is as follows. Serine/threonine kinase that phosphorylates baf-1, thus regulating the association of baf-1 with chromatin and nuclear membrane proteins during nuclear envelope formation. May act through the egl-17 signaling pathway. Essential in hermaphrodites for formation of the vulva, uterus, and uterine seam cells and for development and maintenance of the somatic gonad and thus the germ line. Acts to prevent cep-1 from triggering an inappropriate cell cycle arrest, thereby promoting germ cell proliferation. Regulates anchor cell polarity and the timing of anchor cell invasion through the basement membranes separating vulval and somatic gonadal cells during the L3 larval stage. This is Serine/threonine-protein kinase VRK1 from Caenorhabditis elegans.